The chain runs to 148 residues: Antitoxin Xre (148 aa).

The protein belongs to the MbcA/ParS/Xre antitoxin family. In terms of assembly, homodimer. Forms a complex with cognate toxin Rse.

Functionally, antitoxin component of a type II toxin-antitoxin (TA) system. Neutralizes the activity of cognate toxin Res. This is Antitoxin Xre from Yersinia enterocolitica serotype O:8 / biotype 1B (strain NCTC 13174 / 8081).